A 113-amino-acid chain; its full sequence is MNTVRVTFLLVFVLAVSLGQADKDENRMEVQEKTEQGKSYLDFAENLLLQKLEELEAKLLEEDSEESRNSRQKRCIGEGVPCDENDPRCCSGLVCLKPTLHGIWYKSYYCYKK.

An N-terminal signal peptide occupies residues 1–21 (MNTVRVTFLLVFVLAVSLGQA). Positions 22 to 74 (DKDENRMEVQEKTEQGKSYLDFAENLLLQKLEELEAKLLEEDSEESRNSRQKR) are excised as a propeptide. The segment at 61-83 (EEDSEESRNSRQKRCIGEGVPCD) is disordered. Cystine bridges form between Cys75-Cys90, Cys82-Cys95, and Cys89-Cys110.

This sequence belongs to the neurotoxin 14 (magi-1) family. 01 (HNTX-16) subfamily. In terms of tissue distribution, expressed by the venom gland.

It is found in the secreted. Probable ion channel inhibitor. This is U11-theraphotoxin-Hhn1a from Cyriopagopus hainanus (Chinese bird spider).